Reading from the N-terminus, the 220-residue chain is UPF0502 protein PSPPH_2577 (220 aa).

It belongs to the UPF0502 family.

This Pseudomonas savastanoi pv. phaseolicola (strain 1448A / Race 6) (Pseudomonas syringae pv. phaseolicola (strain 1448A / Race 6)) protein is UPF0502 protein PSPPH_2577.